The following is a 224-amino-acid chain: Glutathione S-transferase D7 (224 aa).

The GST N-terminal domain maps to 2-83; it reads PNLDLYNFPM…YLVEKYGKPD (82 aa). Residues 53–55 and 67–69 contribute to the glutathione site; these read HTI and ESR. The GST C-terminal domain occupies 90–210; sequence DPQKRALINQ…LESLQQGKKF (121 aa).

The protein belongs to the GST superfamily. Delta family. Homodimer.

It carries out the reaction RX + glutathione = an S-substituted glutathione + a halide anion + H(+). Its function is as follows. Conjugation of reduced glutathione to a wide number of exogenous and endogenous hydrophobic electrophiles. May be involved in detoxification. This chain is Glutathione S-transferase D7, found in Drosophila melanogaster (Fruit fly).